Here is a 628-residue protein sequence, read N- to C-terminus: Putative lipase ATG15 (628 aa).

Over 1 to 32 the chain is Cytoplasmic; that stretch reads MLAAEKRRLLHKTRPVSASEKPGSIYPQRALY. A helical; Signal-anchor for type II membrane protein transmembrane segment spans residues 33–53; it reads LLVCFSIATISLGYLHFIGAI. At 54–628 the chain is on the lumenal side; the sequence is DIGRFGISSV…GYDGDVDDDQ (575 aa). N-linked (GlcNAc...) asparagine glycosylation is found at asparagine 261, asparagine 299, and asparagine 383. Serine 401 (charge relay system) is an active-site residue. The N-linked (GlcNAc...) asparagine glycan is linked to asparagine 518. The interval 540–605 is disordered; sequence HDDDVPDEPE…ISEPSESPKK (66 aa). Residues 562 to 586 are compositionally biased toward low complexity; the sequence is PSSSTSDGKNNRISSTATTTISPTS. Residues 591–600 are compositionally biased toward polar residues; the sequence is PTSSDISEPS.

The protein belongs to the AB hydrolase superfamily. Lipase family. As to quaternary structure, binds to both phosphatidylinositol (PI) and phosphatidylinositol 3,5-bisphosphate (PIP2).

The protein resides in the endosome. It is found in the multivesicular body membrane. It localises to the prevacuolar compartment membrane. It carries out the reaction a triacylglycerol + H2O = a diacylglycerol + a fatty acid + H(+). In terms of biological role, lipase which is essential for lysis of subvacuolar cytoplasm to vacuole targeted bodies and intravacuolar autophagic bodies. Involved in the lysis of intravacuolar multivesicular body (MVB) vesicles. The intravacuolar membrane disintegration by ATG15 is critical to life span extension. This Scheffersomyces stipitis (strain ATCC 58785 / CBS 6054 / NBRC 10063 / NRRL Y-11545) (Yeast) protein is Putative lipase ATG15 (ATG15).